We begin with the raw amino-acid sequence, 157 residues long: Sorting nexin-3 (157 aa).

Residues 1–21 (MSKPFQPISDVINTSPKNKSQ) form a disordered region. A compositionally biased stretch (polar residues) spans 11–21 (VINTSPKNKSQ). The PX domain occupies 32–152 (NFLEIEVKNP…EFIQNEKWDP (121 aa)). Arg75, Ser77, Lys101, and Arg117 together coordinate a 1,2-diacyl-sn-glycero-3-phospho-(1D-myo-inositol-3-phosphate).

It belongs to the sorting nexin family.

Its subcellular location is the cytoplasm. It localises to the golgi apparatus membrane. The protein resides in the prevacuolar compartment membrane. Functionally, required for retention of late Golgi membrane proteins. Component of the retrieval machinery that functions by direct interaction with the cytosolic tails of certain TGN membrane proteins during the sorting/budding process at the prevacuolar compartment. Binds phosphatidylinositol 3-phosphate (PtdIns(P3)). The sequence is that of Sorting nexin-3 (SNX3) from Candida albicans (strain SC5314 / ATCC MYA-2876) (Yeast).